Reading from the N-terminus, the 93-residue chain is Small integral membrane protein 36 (93 aa).

A helical transmembrane segment spans residues 14–34 (LIILVASYVILLLVFLISCVL). A disordered region spans residues 73-93 (PKGPGLSLGDPAPLGKKSTMV).

Its subcellular location is the membrane. The polypeptide is Small integral membrane protein 36 (Homo sapiens (Human)).